Here is a 580-residue protein sequence, read N- to C-terminus: Probable RNA-binding protein CG14230 (580 aa).

An RRM domain is found at 4 to 81; that stretch reads TRFFLADLPT…EKLRVSLAKE (78 aa). Residues 89–100 show a composition bias toward basic and acidic residues; sequence REREENQRREQG. 2 disordered regions span residues 89–131 and 173–211; these read RERE…EDEE and QHRK…KSAI. Residues 110–120 show a composition bias toward polar residues; that stretch reads PSSQLLVQSGQ. At Ser-231 the chain carries Phosphoserine. Acidic residues-rich tracts occupy residues 254 to 263 and 298 to 313; these read ENDDDEEEEQ and NEEE…EPEE. 3 disordered regions span residues 254–316, 333–395, and 463–520; these read ENDD…ESER, SAND…SAVS, and PFSY…IPRN. 2 stretches are compositionally biased toward basic and acidic residues: residues 348–358 and 365–377; these read LRFDPAKEGHQ and QPKE…EETS. Polar residues predominate over residues 386–395; it reads AGNSQASAVS. Ser-468 bears the Phosphoserine mark. The residue at position 475 (Thr-475) is a Phosphothreonine.

This Drosophila melanogaster (Fruit fly) protein is Probable RNA-binding protein CG14230.